The primary structure comprises 523 residues: MSQQVIIFDTTLRDGEQALQASLSVKEKLQIALALERMGVDVMEVGFPVSSPGDFESVQTIARQVKNSRVCALARCVEKDIDVAAESLKVADAFRIHTFIATSPMHIATKLRSTLDEVIERAIYMVKRARNYTDDVEFSCEDAGRTPIDDLARVVEAAINAGAKTINIPDTVGYTMPFEFGGIISGLYERVPNIDKAIISVHTHDDLGLGVGNALAAVHAGARQVEGAMNGIGERAGNCSLEEVIMAIKVRQDILNVHTRINHQEIWRTSQLVSQICNMPIPANKAIVGSGAFAHSSGIHQDGVLKNRENYEIMTPESIGLNQIQLNLTSRSGRAAVKHRMDEMGYKESEYNLDNLYDAFLKLADKKGQVFDYDLEALAFINKQQEEPEHFRLDYFSVQSGSNDIATASVKLACGDDIKAEAANGNGPVDAIYQAINRITDYNIELVKYSLSAKGHGKDALGQVDIVANYNGRRFHGVGLATDIVESSAKAMVHVLNNIWRAAEVEKELQRKAQNKENNKETV.

The 263-residue stretch at 5 to 267 (VIIFDTTLRD…HTRINHQEIW (263 aa)) folds into the Pyruvate carboxyltransferase domain. Asp14, His202, His204, and Asn238 together coordinate Mn(2+). The interval 392-523 (RLDYFSVQSG…QNKENNKETV (132 aa)) is regulatory domain.

This sequence belongs to the alpha-IPM synthase/homocitrate synthase family. LeuA type 1 subfamily. In terms of assembly, homodimer. It depends on Mn(2+) as a cofactor.

Its subcellular location is the cytoplasm. The enzyme catalyses 3-methyl-2-oxobutanoate + acetyl-CoA + H2O = (2S)-2-isopropylmalate + CoA + H(+). It participates in amino-acid biosynthesis; L-leucine biosynthesis; L-leucine from 3-methyl-2-oxobutanoate: step 1/4. Catalyzes the condensation of the acetyl group of acetyl-CoA with 3-methyl-2-oxobutanoate (2-ketoisovalerate) to form 3-carboxy-3-hydroxy-4-methylpentanoate (2-isopropylmalate). The protein is 2-isopropylmalate synthase of Citrobacter koseri (strain ATCC BAA-895 / CDC 4225-83 / SGSC4696).